Consider the following 361-residue polypeptide: MDRPDATFTLAYVVFALCFVFTPNEFRSAGFTVQHMFSEWLGSEDISFIQHHIRRTTLTVLFHSFLPLGYYIGMCFAAPEQNLMYVHHASQGWQMYFGLSLVIQLLSCALAFYWSRRGWANHPICKALSVHALPQSSWRAVASSINTEFRRIDKFASGSPSARVIVTDTWVMKVTTYSLHVALHQDCHLTVTDSKHHSLSPDLNTPVQIVTITVGSINPRVKSFDIRLKSTEYAELQEKLHAPIRNAANVVIHLTMSELFLETFKSYVRMNVVYKCPSGQELEPCIGCMQVNANVKLLCLCQSDEGECQQCYCRPMWCLTCMGKWFASRQDQQQPETWLSSRVPCPTCRAKFCILDVCPIE.

Residues 1 to 6 (MDRPDA) are Lumenal-facing. Residues 7-27 (TFTLAYVVFALCFVFTPNEFR) form a helical membrane-spanning segment. Over 28-56 (SAGFTVQHMFSEWLGSEDISFIQHHIRRT) the chain is Cytoplasmic. Residues 57–77 (TLTVLFHSFLPLGYYIGMCFA) traverse the membrane as a helical segment. The Lumenal portion of the chain corresponds to 78-94 (APEQNLMYVHHASQGWQ). A helical membrane pass occupies residues 95–115 (MYFGLSLVIQLLSCALAFYWS). Over 116 to 361 (RRGWANHPIC…FCILDVCPIE (246 aa)) the chain is Cytoplasmic. An RING-type; degenerate zinc finger spans residues 285–349 (CIGCMQVNAN…SSRVPCPTCR (65 aa)).

This sequence belongs to the TMEM129 family. Integral component of ER-resident dislocation complexes.

The protein resides in the endoplasmic reticulum membrane. The catalysed reaction is S-ubiquitinyl-[E2 ubiquitin-conjugating enzyme]-L-cysteine + [acceptor protein]-L-lysine = [E2 ubiquitin-conjugating enzyme]-L-cysteine + N(6)-ubiquitinyl-[acceptor protein]-L-lysine.. The protein operates within protein modification; protein ubiquitination. Functionally, E3 ubiquitin-protein ligase involved in ER-associated protein degradation, preferentially associates with the E2 enzyme UBE2J2. This chain is E3 ubiquitin-protein ligase TM129 (tmem129), found in Danio rerio (Zebrafish).